The primary structure comprises 679 residues: Glycine--tRNA ligase beta subunit (679 aa).

The protein belongs to the class-II aminoacyl-tRNA synthetase family. In terms of assembly, tetramer of two alpha and two beta subunits.

It is found in the cytoplasm. The enzyme catalyses tRNA(Gly) + glycine + ATP = glycyl-tRNA(Gly) + AMP + diphosphate. This Streptococcus agalactiae serotype Ia (strain ATCC 27591 / A909 / CDC SS700) protein is Glycine--tRNA ligase beta subunit.